The sequence spans 343 residues: 2-deoxy-scyllo-inosamine dehydrogenase (343 aa).

7 residues coordinate Zn(2+): cysteine 37, histidine 59, cysteine 91, cysteine 94, cysteine 97, cysteine 105, and glutamate 146.

It belongs to the zinc-containing alcohol dehydrogenase family. DOIA dehydrogenase subfamily. The cofactor is Zn(2+).

It carries out the reaction 2-deoxy-scyllo-inosamine + NADP(+) = 3-amino-2,3-dideoxy-scyllo-inosose + NADPH + H(+). The catalysed reaction is 2-deoxy-scyllo-inosamine + NAD(+) = 3-amino-2,3-dideoxy-scyllo-inosose + NADH + H(+). It functions in the pathway metabolic intermediate biosynthesis; 2-deoxystreptamine biosynthesis; 2-deoxystreptamine from D-glucose 6-phosphate: step 3/4. It participates in antibiotic biosynthesis; kanamycin biosynthesis. In terms of biological role, catalyzes the oxidation of 2-deoxy-scyllo-inosamine (DOIA) with NAD(+) or NADP(+), forming 3-amino-2,3-dideoxy-scyllo-inosose (amino-DOI). This is 2-deoxy-scyllo-inosamine dehydrogenase (kanE) from Streptomyces kanamyceticus.